Consider the following 224-residue polypeptide: MNTTEQTSSLPSAGGENGVKLLLKYFPDLTEEQRKQFAALYELYIDWNSKINVISRKDIENLYEHHVLHSLGIARIIRFRAGSSVMDLGTGGGFPGIPLAILFPDTKFHLVDSIGKKVRVATEVANAIGLKNVTFRHARAEEEKQTFDFVVSRAVMPLADLIKIIRKNISPKQQNALPNGLICLKGGELEHEAMPFKHKTSMHNLNEDFDEEFFQTKKVVYVTI.

Residues Gly89, Phe94, 140 to 141 (AE), and Arg153 each bind S-adenosyl-L-methionine.

Belongs to the methyltransferase superfamily. RNA methyltransferase RsmG family.

The protein localises to the cytoplasm. Functionally, specifically methylates the N7 position of a guanine in 16S rRNA. The polypeptide is Ribosomal RNA small subunit methyltransferase G (Bacteroides fragilis (strain YCH46)).